The following is a 248-amino-acid chain: Exosome complex component Rrp41 (248 aa).

It belongs to the RNase PH family. Rrp41 subfamily. In terms of assembly, component of the archaeal exosome complex. Forms a hexameric ring-like arrangement composed of 3 Rrp41-Rrp42 heterodimers. The hexameric ring associates with a trimer of Rrp4 and/or Csl4 subunits.

It is found in the cytoplasm. In terms of biological role, catalytic component of the exosome, which is a complex involved in RNA degradation. Has 3'-&gt;5' exoribonuclease activity. Can also synthesize heteromeric RNA-tails. Binds RNA. This is Exosome complex component Rrp41 from Saccharolobus solfataricus (strain ATCC 35092 / DSM 1617 / JCM 11322 / P2) (Sulfolobus solfataricus).